We begin with the raw amino-acid sequence, 276 residues long: Large ribosomal subunit protein uL2 (276 aa).

Disordered stretches follow at residues 1–58 and 218–276; these read MAIR…GGGH and RPIT…KNRK. The span at 16 to 27 shows a compositional bias: polar residues; that stretch reads ASVSDFSDLTRS. Residues 255 to 276 are compositionally biased toward basic residues; that stretch reads RRPKKASNKMIVRRRPNGKNRK.

The protein belongs to the universal ribosomal protein uL2 family. As to quaternary structure, part of the 50S ribosomal subunit. Forms a bridge to the 30S subunit in the 70S ribosome.

One of the primary rRNA binding proteins. Required for association of the 30S and 50S subunits to form the 70S ribosome, for tRNA binding and peptide bond formation. It has been suggested to have peptidyltransferase activity; this is somewhat controversial. Makes several contacts with the 16S rRNA in the 70S ribosome. This is Large ribosomal subunit protein uL2 from Bifidobacterium animalis subsp. lactis (strain AD011).